Reading from the N-terminus, the 560-residue chain is CTP synthase (560 aa).

The amidoligase domain stretch occupies residues 1–272 (MSIGDVCSAR…DTQILSHFGM (272 aa)). Residue Ser-20 participates in CTP binding. Ser-20 provides a ligand contact to UTP. ATP is bound by residues 21–26 (SLGKGL) and Asp-78. Mg(2+) is bound by residues Asp-78 and Glu-146. CTP is bound by residues 153–155 (DIE), 193–198 (KTKPTQ), and Lys-229. UTP contacts are provided by residues 193–198 (KTKPTQ) and Lys-229. Positions 297–539 (TIAIIGKYTK…VQNVLQIKQR (243 aa)) constitute a Glutamine amidotransferase type-1 domain. Gly-356 is a binding site for L-glutamine. Cys-383 functions as the Nucleophile; for glutamine hydrolysis in the catalytic mechanism. Residues 384–387 (MGMQ), Glu-407, and Arg-467 each bind L-glutamine. Residues His-512 and Glu-514 contribute to the active site.

The protein belongs to the CTP synthase family. Homotetramer.

The enzyme catalyses UTP + L-glutamine + ATP + H2O = CTP + L-glutamate + ADP + phosphate + 2 H(+). The catalysed reaction is L-glutamine + H2O = L-glutamate + NH4(+). It carries out the reaction UTP + NH4(+) + ATP = CTP + ADP + phosphate + 2 H(+). Its pathway is pyrimidine metabolism; CTP biosynthesis via de novo pathway; CTP from UDP: step 2/2. With respect to regulation, allosterically activated by GTP, when glutamine is the substrate; GTP has no effect on the reaction when ammonia is the substrate. The allosteric effector GTP functions by stabilizing the protein conformation that binds the tetrahedral intermediate(s) formed during glutamine hydrolysis. Inhibited by the product CTP, via allosteric rather than competitive inhibition. Functionally, catalyzes the ATP-dependent amination of UTP to CTP with either L-glutamine or ammonia as the source of nitrogen. Regulates intracellular CTP levels through interactions with the four ribonucleotide triphosphates. This Anaplasma marginale (strain Florida) protein is CTP synthase.